The chain runs to 345 residues: S-adenosylmethionine:tRNA ribosyltransferase-isomerase (345 aa).

It belongs to the QueA family. Monomer.

It localises to the cytoplasm. The catalysed reaction is 7-aminomethyl-7-carbaguanosine(34) in tRNA + S-adenosyl-L-methionine = epoxyqueuosine(34) in tRNA + adenine + L-methionine + 2 H(+). It participates in tRNA modification; tRNA-queuosine biosynthesis. In terms of biological role, transfers and isomerizes the ribose moiety from AdoMet to the 7-aminomethyl group of 7-deazaguanine (preQ1-tRNA) to give epoxyqueuosine (oQ-tRNA). This is S-adenosylmethionine:tRNA ribosyltransferase-isomerase from Shewanella baltica (strain OS185).